The following is a 281-amino-acid chain: Pantothenate synthetase (281 aa).

31 to 38 (MGALHDGH) contributes to the ATP binding site. His-38 (proton donor) is an active-site residue. Gln-62 contacts (R)-pantoate. Gln-62 is a beta-alanine binding site. 148 to 151 (GQKD) lines the ATP pocket. Gln-154 provides a ligand contact to (R)-pantoate. Residues Val-177 and 185–188 (LSSR) contribute to the ATP site.

This sequence belongs to the pantothenate synthetase family. Homodimer.

The protein localises to the cytoplasm. It catalyses the reaction (R)-pantoate + beta-alanine + ATP = (R)-pantothenate + AMP + diphosphate + H(+). It functions in the pathway cofactor biosynthesis; (R)-pantothenate biosynthesis; (R)-pantothenate from (R)-pantoate and beta-alanine: step 1/1. Its function is as follows. Catalyzes the condensation of pantoate with beta-alanine in an ATP-dependent reaction via a pantoyl-adenylate intermediate. This Dinoroseobacter shibae (strain DSM 16493 / NCIMB 14021 / DFL 12) protein is Pantothenate synthetase.